Here is a 542-residue protein sequence, read N- to C-terminus: Retron Ec83 probable ATPase (542 aa).

An ATP-binding motif is present at residues 92-99; sequence GNNGCGKS.

In terms of biological role, probable ATPase component of antiviral defense system retron Ec83, composed of a non-coding RNA (ncRNA), a reverse transcriptase (RT), this protein and a putative HNH endonuclease. Expression of retron Ec83 confers protection against bacteriophage T2, T4 and T6. At multiplicity of infection (MOI) of 0.02 cultures slow growth when infected with T4 but do not collapse, at MOI 2 cultures enter growth stasis. This chain is Retron Ec83 probable ATPase, found in Escherichia coli.